Consider the following 598-residue polypeptide: Elongation factor 4 (598 aa).

Residues 2 to 184 (NRIRNFSIIA…TIVAKLPPPK (183 aa)) form the tr-type G domain. Residues 14–19 (DHGKST) and 131–134 (NKID) each bind GTP.

Belongs to the TRAFAC class translation factor GTPase superfamily. Classic translation factor GTPase family. LepA subfamily.

The protein resides in the cell inner membrane. It catalyses the reaction GTP + H2O = GDP + phosphate + H(+). Functionally, required for accurate and efficient protein synthesis under certain stress conditions. May act as a fidelity factor of the translation reaction, by catalyzing a one-codon backward translocation of tRNAs on improperly translocated ribosomes. Back-translocation proceeds from a post-translocation (POST) complex to a pre-translocation (PRE) complex, thus giving elongation factor G a second chance to translocate the tRNAs correctly. Binds to ribosomes in a GTP-dependent manner. The sequence is that of Elongation factor 4 from Desulfosudis oleivorans (strain DSM 6200 / JCM 39069 / Hxd3) (Desulfococcus oleovorans).